Consider the following 468-residue polypeptide: MTNAKTLYQKVWDAHIVTAPEGEAPVIYVDRHLVHEVTSPQAFSGLKVAGRKLRAPEKTFATMDHNTSTRSASLDALSPMARTQVETLAQNCKDFGVRLYDIHHPNQGIVHVMGPELGITLPGTVIVCGDSHTATHGAFGALAFGIGTSEVEHVLATQTLRQLKAKTMKIEVRGHVTDGVTAKDIVLAIIGKIGMDGGTGYVVEFCGEAIEALSMEGRMTVCNMAIEMGAKAGMVAPDQTTFDYLAGREFAPKGEDWTEAVAYWKAIKTDDGAVFDAVVELDAADIAPQLTWGTNPGQVVAIDGKVPDPINEANPSTRASMEKALEYIGLSAGTPMTDISINKVFIGSCTNSRIEDLRSAAVHAKGRKVASGVTAIVVPGSGQVKAQAEAEGLDKIFIEAGFEWRLPGCSMCLAMNDDRLEAGDRCASTSNRNFEGRQGRGSRTHLVSPAMAAAAAVAGHFVDIRKPY.

3 residues coordinate [4Fe-4S] cluster: cysteine 349, cysteine 409, and cysteine 412.

The protein belongs to the aconitase/IPM isomerase family. LeuC type 1 subfamily. In terms of assembly, heterodimer of LeuC and LeuD. Requires [4Fe-4S] cluster as cofactor.

It catalyses the reaction (2R,3S)-3-isopropylmalate = (2S)-2-isopropylmalate. Its pathway is amino-acid biosynthesis; L-leucine biosynthesis; L-leucine from 3-methyl-2-oxobutanoate: step 2/4. Catalyzes the isomerization between 2-isopropylmalate and 3-isopropylmalate, via the formation of 2-isopropylmaleate. The chain is 3-isopropylmalate dehydratase large subunit from Shewanella baltica (strain OS223).